The primary structure comprises 207 residues: Dephospho-CoA kinase (207 aa).

Residues 10–207 (TLGLTGGIGS…FYLTLRGGQS (198 aa)) form the DPCK domain. Residue 18–23 (GSGKSA) participates in ATP binding.

This sequence belongs to the CoaE family.

It is found in the cytoplasm. The enzyme catalyses 3'-dephospho-CoA + ATP = ADP + CoA + H(+). It participates in cofactor biosynthesis; coenzyme A biosynthesis; CoA from (R)-pantothenate: step 5/5. Catalyzes the phosphorylation of the 3'-hydroxyl group of dephosphocoenzyme A to form coenzyme A. This chain is Dephospho-CoA kinase, found in Pseudomonas fluorescens (strain ATCC BAA-477 / NRRL B-23932 / Pf-5).